The primary structure comprises 298 residues: Tyrosine recombinase XerD (298 aa).

One can recognise a Core-binding (CB) domain in the interval 2-87 (KQELARIEQF…AVRRLFQYLY (86 aa)). The Tyr recombinase domain occupies 108-292 (RLPKDLSEAQ…ATERLRQLHQ (185 aa)). Active-site residues include Arg148, Lys172, His244, Arg247, and His270. Tyr279 serves as the catalytic O-(3'-phospho-DNA)-tyrosine intermediate.

Belongs to the 'phage' integrase family. XerD subfamily. As to quaternary structure, forms a cyclic heterotetrameric complex composed of two molecules of XerC and two molecules of XerD, in which XerC interacts with XerD via its C-terminal region, XerD interacts with XerC via its C-terminal region and so on.

The protein localises to the cytoplasm. Its activity is regulated as follows. FtsK may regulate the catalytic switch between XerC and XerD in the heterotetrameric complex during the two steps of the recombination process. Functionally, site-specific tyrosine recombinase, which acts by catalyzing the cutting and rejoining of the recombining DNA molecules. Binds cooperatively to specific DNA consensus sequences that are separated from XerC binding sites by a short central region, forming the heterotetrameric XerC-XerD complex that recombines DNA substrates. The complex is essential to convert dimers of the bacterial chromosome into monomers to permit their segregation at cell division. It also contributes to the segregational stability of plasmids. In the complex XerD specifically exchanges the bottom DNA strands. The polypeptide is Tyrosine recombinase XerD (Shigella flexneri).